A 398-amino-acid chain; its full sequence is 1-deoxy-D-xylulose 5-phosphate reductoisomerase (398 aa).

8 residues coordinate NADPH: Thr-10, Gly-11, Ser-12, Ile-13, Gly-36, Lys-37, Asn-38, and Asn-124. Lys-125 lines the 1-deoxy-D-xylulose 5-phosphate pocket. Glu-126 is a binding site for NADPH. A Mn(2+)-binding site is contributed by Asp-150. Positions 151, 152, 186, and 209 each coordinate 1-deoxy-D-xylulose 5-phosphate. Glu-152 serves as a coordination point for Mn(2+). Residue Gly-215 coordinates NADPH. Positions 222, 227, 228, and 231 each coordinate 1-deoxy-D-xylulose 5-phosphate. Mn(2+) is bound at residue Glu-231.

This sequence belongs to the DXR family. Homodimer. It depends on Mg(2+) as a cofactor. The cofactor is Mn(2+). Co(2+) serves as cofactor.

The catalysed reaction is 2-C-methyl-D-erythritol 4-phosphate + NADP(+) = 1-deoxy-D-xylulose 5-phosphate + NADPH + H(+). It functions in the pathway isoprenoid biosynthesis; isopentenyl diphosphate biosynthesis via DXP pathway; isopentenyl diphosphate from 1-deoxy-D-xylulose 5-phosphate: step 1/6. With respect to regulation, inhibited by fosmidomycin. Functionally, catalyzes the NADPH-dependent rearrangement and reduction of 1-deoxy-D-xylulose-5-phosphate (DXP) to 2-C-methyl-D-erythritol 4-phosphate (MEP). The sequence is that of 1-deoxy-D-xylulose 5-phosphate reductoisomerase (dxr) from Escherichia coli (strain K12).